A 212-amino-acid chain; its full sequence is Pyridoxine/pyridoxamine 5'-phosphate oxidase (212 aa).

Residues 8–11 (RREY) and Lys-66 contribute to the substrate site. FMN is bound by residues 61–66 (RIVLLK), 76–77 (FT), Arg-82, Lys-83, and Gln-105. Residues Tyr-123, Arg-127, and Ser-131 each coordinate substrate. FMN-binding positions include 140 to 141 (QS) and Trp-185. A substrate-binding site is contributed by 191 to 193 (RLH). An FMN-binding site is contributed by Arg-195.

The protein belongs to the pyridoxamine 5'-phosphate oxidase family. Homodimer. The cofactor is FMN.

The catalysed reaction is pyridoxamine 5'-phosphate + O2 + H2O = pyridoxal 5'-phosphate + H2O2 + NH4(+). It carries out the reaction pyridoxine 5'-phosphate + O2 = pyridoxal 5'-phosphate + H2O2. It participates in cofactor metabolism; pyridoxal 5'-phosphate salvage; pyridoxal 5'-phosphate from pyridoxamine 5'-phosphate: step 1/1. The protein operates within cofactor metabolism; pyridoxal 5'-phosphate salvage; pyridoxal 5'-phosphate from pyridoxine 5'-phosphate: step 1/1. Functionally, catalyzes the oxidation of either pyridoxine 5'-phosphate (PNP) or pyridoxamine 5'-phosphate (PMP) into pyridoxal 5'-phosphate (PLP). The protein is Pyridoxine/pyridoxamine 5'-phosphate oxidase of Shewanella sp. (strain MR-7).